Consider the following 658-residue polypeptide: DNA mismatch repair protein MutL (658 aa).

The segment covering 114–130 has biased composition (basic and acidic residues); sequence RQEDSSHATQVKAEDGK. Disordered regions lie at residues 114–138 and 355–405; these read RQED…TAAA and PSEN…HSLS.

Belongs to the DNA mismatch repair MutL/HexB family.

Functionally, this protein is involved in the repair of mismatches in DNA. It is required for dam-dependent methyl-directed DNA mismatch repair. May act as a 'molecular matchmaker', a protein that promotes the formation of a stable complex between two or more DNA-binding proteins in an ATP-dependent manner without itself being part of a final effector complex. This is DNA mismatch repair protein MutL from Neisseria gonorrhoeae (strain ATCC 700825 / FA 1090).